Consider the following 379-residue polypeptide: Structure-specific endonuclease subunit EME2 (379 aa).

The segment at 1-55 (MARVGPGRAGVSCQGRGRGRGGSGQRRPPTWEISDSDAEDSAGSEAAARARDPAG) is disordered. A nuclease-like domain; forms the post-nick DNA binding interface and is involved in DNA recognition and bending region spans residues 50–266 (ARDPAGERRA…YPLKQYRESQ (217 aa)). The helix-hairpin-helix (2HhH); forms the pre-nick DNA binding interface and is involved in DNA recognition and bending stretch occupies residues 288 to 379 (GLQAAWRRQI…NPDLLLDLGS (92 aa)).

It belongs to the EME1/MMS4 family. As to quaternary structure, part of the heterodimeric MUS81-EME2 complex; the complex forms specifically during the DNA replication phase of the cell cycle.

The protein localises to the nucleus. Non-catalytic subunit of the structure-specific, heterodimeric DNA endonuclease MUS81-EME2 which is involved in the maintenance of genome stability. In the complex, EME2 is required for DNA cleavage, participating in DNA recognition and bending. MUS81-EME2 cleaves 3'-flaps and nicked Holliday junctions, and exhibit limited endonuclease activity with 5' flaps and nicked double-stranded DNAs. MUS81-EME2 which is active during the replication of DNA is more specifically involved in replication fork processing. Replication forks frequently encounter obstacles to their passage, including DNA base lesions, DNA interstrand cross-links, difficult-to-replicate sequences, transcription bubbles, or tightly bound proteins. One mechanism for the restart of a stalled replication fork involves nucleolytic cleavage mediated by the MUS81-EME2 endonuclease. By acting upon the stalled fork, MUS81-EME2 generates a DNA double-strand break (DSB) that can be repaired by homologous recombination, leading to the restoration of an active fork. MUS81-EME2 could also function in telomere maintenance. This is Structure-specific endonuclease subunit EME2 from Homo sapiens (Human).